The following is a 352-amino-acid chain: Photosystem II D2 protein (352 aa).

A helical transmembrane segment spans residues 40 to 60; sequence CAFMALGGWLTGTTFVTSWYT. Residue H117 participates in chlorophyll a binding. The chain crosses the membrane as a helical span at residues 124-140; the sequence is GFMLRQFEIARLVGIRP. Pheophytin a is bound by residues Q129 and N142. Residues 152–165 form a helical membrane-spanning segment; the sequence is VFVSVFLMYPLGQS. Residue H197 coordinates chlorophyll a. The helical transmembrane segment at 207–227 threads the bilayer; it reads GALLCAIHGATVENTLFEDSD. Residues H214 and F261 each contribute to the a plastoquinone site. H214 contacts Fe cation. H268 provides a ligand contact to Fe cation. A helical transmembrane segment spans residues 278–294; that stretch reads GLWMSSVGIVGLALNLR.

This sequence belongs to the reaction center PufL/M/PsbA/D family. In terms of assembly, PSII is composed of 1 copy each of membrane proteins PsbA, PsbB, PsbC, PsbD, PsbE, PsbF, PsbH, PsbI, PsbJ, PsbK, PsbL, PsbM, PsbT, PsbX, PsbY, PsbZ, Psb30/Ycf12, peripheral proteins PsbO, CyanoQ (PsbQ), PsbU, PsbV and a large number of cofactors. It forms dimeric complexes. It depends on The D1/D2 heterodimer binds P680, chlorophylls that are the primary electron donor of PSII, and subsequent electron acceptors. It shares a non-heme iron and each subunit binds pheophytin, quinone, additional chlorophylls, carotenoids and lipids. There is also a Cl(-1) ion associated with D1 and D2, which is required for oxygen evolution. The PSII complex binds additional chlorophylls, carotenoids and specific lipids. as a cofactor.

Its subcellular location is the cellular thylakoid membrane. It carries out the reaction 2 a plastoquinone + 4 hnu + 2 H2O = 2 a plastoquinol + O2. Its function is as follows. Photosystem II (PSII) is a light-driven water:plastoquinone oxidoreductase that uses light energy to abstract electrons from H(2)O, generating O(2) and a proton gradient subsequently used for ATP formation. It consists of a core antenna complex that captures photons, and an electron transfer chain that converts photonic excitation into a charge separation. The D1/D2 (PsbA/PsbD) reaction center heterodimer binds P680, the primary electron donor of PSII as well as several subsequent electron acceptors. D2 is needed for assembly of a stable PSII complex. The protein is Photosystem II D2 protein of Picosynechococcus sp. (strain ATCC 27264 / PCC 7002 / PR-6) (Agmenellum quadruplicatum).